We begin with the raw amino-acid sequence, 122 residues long: uncharacterized protein (122 aa).

The first 17 residues, 1 to 17 (MKYSSIFSMLSFFILFA), serve as a signal peptide directing secretion.

This is an uncharacterized protein from Escherichia coli (strain K12).